Consider the following 263-residue polypeptide: Hydroxyethylthiazole kinase (263 aa).

Met39 provides a ligand contact to substrate. Residues Lys115 and Thr160 each contribute to the ATP site. Gly187 serves as a coordination point for substrate.

Belongs to the Thz kinase family. Mg(2+) serves as cofactor.

It carries out the reaction 5-(2-hydroxyethyl)-4-methylthiazole + ATP = 4-methyl-5-(2-phosphooxyethyl)-thiazole + ADP + H(+). It functions in the pathway cofactor biosynthesis; thiamine diphosphate biosynthesis; 4-methyl-5-(2-phosphoethyl)-thiazole from 5-(2-hydroxyethyl)-4-methylthiazole: step 1/1. Catalyzes the phosphorylation of the hydroxyl group of 4-methyl-5-beta-hydroxyethylthiazole (THZ). In Staphylococcus haemolyticus (strain JCSC1435), this protein is Hydroxyethylthiazole kinase.